A 205-amino-acid chain; its full sequence is Recombination protein RecR (205 aa).

A C4-type zinc finger spans residues 58–75 (CSLCQNVTDKEIDPCNIC). The region spanning 83–182 (RVVCVVEAPN…KVTRIARGIP (100 aa)) is the Toprim domain.

Belongs to the RecR family.

May play a role in DNA repair. It seems to be involved in an RecBC-independent recombinational process of DNA repair. It may act with RecF and RecO. In Chloroherpeton thalassium (strain ATCC 35110 / GB-78), this protein is Recombination protein RecR.